We begin with the raw amino-acid sequence, 233 residues long: Purine nucleoside phosphorylase DeoD-type (233 aa).

H4 is an a purine D-ribonucleoside binding site. Phosphate is bound by residues G20, R24, R43, and 87 to 90; that span reads RVGT. A purine D-ribonucleoside-binding positions include 178 to 180 and 202 to 203; these read EME and SD. The Proton donor role is filled by D203.

It belongs to the PNP/UDP phosphorylase family. In terms of assembly, homohexamer; trimer of homodimers.

It catalyses the reaction a purine D-ribonucleoside + phosphate = a purine nucleobase + alpha-D-ribose 1-phosphate. It carries out the reaction a purine 2'-deoxy-D-ribonucleoside + phosphate = a purine nucleobase + 2-deoxy-alpha-D-ribose 1-phosphate. Catalyzes the reversible phosphorolytic breakdown of the N-glycosidic bond in the beta-(deoxy)ribonucleoside molecules, with the formation of the corresponding free purine bases and pentose-1-phosphate. The chain is Purine nucleoside phosphorylase DeoD-type from Listeria monocytogenes serotype 4b (strain CLIP80459).